The sequence spans 419 residues: Dual specificity mitogen-activated protein kinase kinase 7 (419 aa).

Ala-2 is subject to N-acetylalanine. Positions 2–30 (AASSLEQKLSRLEAKLKQENREARRRIDL) form a coiled coil. Residues 18–30 (KQENREARRRIDL) show a composition bias toward basic and acidic residues. Residues 18-76 (KQENREARRRIDLNLDISPQRPRPTLQLPLANDGGSRSPSSESSPQHPTPPARPRHMLG) are disordered. The span at 36-63 (PQRPRPTLQLPLANDGGSRSPSSESSPQ) shows a compositional bias: low complexity. The tract at residues 37–57 (QRPRPTLQLPLANDGGSRSPS) is d domain. The 261-residue stretch at 120-380 (LENLGEMGSG…YNKLLEHSFI (261 aa)) folds into the Protein kinase domain. Residues 126–134 (MGSGTCGQV) and Lys-149 each bind ATP. The active-site Proton acceptor is Asp-243. The residue at position 271 (Ser-271) is a Phosphoserine; by MAP3K. At Thr-275 the chain carries Phosphothreonine; by MAP3K. Residues 377–400 (HSFIKRYETLEVDVASWFKDVMAK) are DVD domain. At Ser-411 the chain carries Phosphoserine.

This sequence belongs to the protein kinase superfamily. STE Ser/Thr protein kinase family. MAP kinase kinase subfamily. In terms of assembly, interacts with isoform 1 of VRK2. Interacts (via its D domain) with its substrates MAPK8/JNK1, MAPK9/JNK2 and MAPK10/JNK3. Interacts (via its DVD domain) with MAP3Ks activators like MAP3K5/ASK1 and MAP3K1/MEKK1. Interacts with MAPK8IP1/JIP1, MAPK8IP2/JIP2 and MAPK8IP3/JIP3 scaffold proteins. Interacts with RASSF7, the interaction promotes phosphorylation. Found in a complex with SH3RF1, RAC1, MAP3K11/MLK3, MAPK8IP1/JIP1 and MAPK8/JNK1. Found in a complex with SH3RF1, RAC2, MAP3K7/TAK1, MAPK8IP1/JIP1, MAPK8/JNK1 and MAPK9/JNK2. Requires Mg(2+) as cofactor. Post-translationally, activated by phosphorylation on Ser-271 and Thr-275 by MAP kinase kinase kinases (MAP3Ks). In terms of tissue distribution, ubiquitous; with highest level of expression in skeletal muscle. Isoform 3 is found at low levels in placenta, fetal liver, and skeletal muscle.

Its subcellular location is the nucleus. It is found in the cytoplasm. It catalyses the reaction L-seryl-[protein] + ATP = O-phospho-L-seryl-[protein] + ADP + H(+). The catalysed reaction is L-threonyl-[protein] + ATP = O-phospho-L-threonyl-[protein] + ADP + H(+). It carries out the reaction L-tyrosyl-[protein] + ATP = O-phospho-L-tyrosyl-[protein] + ADP + H(+). With respect to regulation, activated by phosphorylation by specific MAP kinase kinase kinases such as MAP3K1/MEKK1, MAP3K3/MEKK3, MAP3K11/MLK3 and MAP3K12/DLK. Functionally, dual specificity protein kinase which acts as an essential component of the MAP kinase signal transduction pathway. Essential component of the stress-activated protein kinase/c-Jun N-terminal kinase (SAP/JNK) signaling pathway. With MAP2K4/MKK4, is the one of the only known kinase to directly activate the stress-activated protein kinase/c-Jun N-terminal kinases MAPK8/JNK1, MAPK9/JNK2 and MAPK10/JNK3. MAP2K4/MKK4 and MAP2K7/MKK7 both activate the JNKs by phosphorylation, but they differ in their preference for the phosphorylation site in the Thr-Pro-Tyr motif. MAP2K4/MKK4 shows preference for phosphorylation of the Tyr residue and MAP2K7/MKK7 for the Thr residue. The monophosphorylation of JNKs on the Thr residue is sufficient to increase JNK activity indicating that MAP2K7/MKK7 is important to trigger JNK activity, while the additional phosphorylation of the Tyr residue by MAP2K4/MKK4 ensures optimal JNK activation. Has a specific role in JNK signal transduction pathway activated by pro-inflammatory cytokines. The MKK/JNK signaling pathway is also involved in mitochondrial death signaling pathway, including the release cytochrome c, leading to apoptosis. Part of a non-canonical MAPK signaling pathway, composed of the upstream MAP3K12 kinase and downstream MAP kinases MAPK1/ERK2 and MAPK3/ERK1, that enhances the AP-1-mediated transcription of APP in response to APOE. This is Dual specificity mitogen-activated protein kinase kinase 7 (MAP2K7) from Homo sapiens (Human).